Consider the following 313-residue polypeptide: Methionyl-tRNA formyltransferase (313 aa).

109 to 112 (SLLP) lines the (6S)-5,6,7,8-tetrahydrofolate pocket.

The protein belongs to the Fmt family.

It carries out the reaction L-methionyl-tRNA(fMet) + (6R)-10-formyltetrahydrofolate = N-formyl-L-methionyl-tRNA(fMet) + (6S)-5,6,7,8-tetrahydrofolate + H(+). Functionally, attaches a formyl group to the free amino group of methionyl-tRNA(fMet). The formyl group appears to play a dual role in the initiator identity of N-formylmethionyl-tRNA by promoting its recognition by IF2 and preventing the misappropriation of this tRNA by the elongation apparatus. The chain is Methionyl-tRNA formyltransferase from Pelotomaculum thermopropionicum (strain DSM 13744 / JCM 10971 / SI).